Here is a 457-residue protein sequence, read N- to C-terminus: Argininosuccinate lyase (457 aa).

This sequence belongs to the lyase 1 family. Argininosuccinate lyase subfamily.

It is found in the cytoplasm. The catalysed reaction is 2-(N(omega)-L-arginino)succinate = fumarate + L-arginine. Its pathway is amino-acid biosynthesis; L-arginine biosynthesis; L-arginine from L-ornithine and carbamoyl phosphate: step 3/3. The protein is Argininosuccinate lyase of Yersinia pseudotuberculosis serotype O:3 (strain YPIII).